The following is a 236-amino-acid chain: Pyridoxine 5'-phosphate synthase (236 aa).

Asn-6 provides a ligand contact to 3-amino-2-oxopropyl phosphate. 8 to 9 (DH) provides a ligand contact to 1-deoxy-D-xylulose 5-phosphate. Arg-17 provides a ligand contact to 3-amino-2-oxopropyl phosphate. His-42 acts as the Proton acceptor in catalysis. The 1-deoxy-D-xylulose 5-phosphate site is built by Arg-44 and His-49. The active-site Proton acceptor is the Glu-69. Residue Thr-99 coordinates 1-deoxy-D-xylulose 5-phosphate. Catalysis depends on His-190, which acts as the Proton donor. 3-amino-2-oxopropyl phosphate is bound by residues Gly-191 and 212-213 (GH).

Belongs to the PNP synthase family. Homooctamer; tetramer of dimers.

The protein resides in the cytoplasm. It carries out the reaction 3-amino-2-oxopropyl phosphate + 1-deoxy-D-xylulose 5-phosphate = pyridoxine 5'-phosphate + phosphate + 2 H2O + H(+). Its pathway is cofactor biosynthesis; pyridoxine 5'-phosphate biosynthesis; pyridoxine 5'-phosphate from D-erythrose 4-phosphate: step 5/5. Its function is as follows. Catalyzes the complicated ring closure reaction between the two acyclic compounds 1-deoxy-D-xylulose-5-phosphate (DXP) and 3-amino-2-oxopropyl phosphate (1-amino-acetone-3-phosphate or AAP) to form pyridoxine 5'-phosphate (PNP) and inorganic phosphate. In Chlorobium phaeobacteroides (strain DSM 266 / SMG 266 / 2430), this protein is Pyridoxine 5'-phosphate synthase.